A 292-amino-acid polypeptide reads, in one-letter code: Non-homologous end joining protein Ku (292 aa).

The Ku domain maps to 9-187; it reads ITFGLVNVPV…TVPPITEREL (179 aa). The segment covering 264–285 has biased composition (low complexity); it reads AASAFPAAEKAPAGKNAATASA. The segment at 264 to 292 is disordered; the sequence is AASAFPAAEKAPAGKNAATASAKKARKLA.

This sequence belongs to the prokaryotic Ku family. As to quaternary structure, homodimer. Interacts with LigD.

Functionally, with LigD forms a non-homologous end joining (NHEJ) DNA repair enzyme, which repairs dsDNA breaks with reduced fidelity. Binds linear dsDNA with 5'- and 3'- overhangs but not closed circular dsDNA nor ssDNA. Recruits and stimulates the ligase activity of LigD. The chain is Non-homologous end joining protein Ku from Leifsonia xyli subsp. xyli (strain CTCB07).